The sequence spans 426 residues: tRNA(Ile)-lysidine synthase (426 aa).

19–24 (SGGLDS) serves as a coordination point for ATP.

This sequence belongs to the tRNA(Ile)-lysidine synthase family.

It is found in the cytoplasm. It catalyses the reaction cytidine(34) in tRNA(Ile2) + L-lysine + ATP = lysidine(34) in tRNA(Ile2) + AMP + diphosphate + H(+). Ligates lysine onto the cytidine present at position 34 of the AUA codon-specific tRNA(Ile) that contains the anticodon CAU, in an ATP-dependent manner. Cytidine is converted to lysidine, thus changing the amino acid specificity of the tRNA from methionine to isoleucine. This Neisseria meningitidis serogroup A / serotype 4A (strain DSM 15465 / Z2491) protein is tRNA(Ile)-lysidine synthase.